Consider the following 279-residue polypeptide: Small ribosomal subunit protein uS2 (279 aa).

Belongs to the universal ribosomal protein uS2 family. Component of the small ribosomal subunit. Mature ribosomes consist of a small (40S) and a large (60S) subunit. The 40S subunit contains about 33 different proteins and 1 molecule of RNA (18S). The 60S subunit contains about 49 different proteins and 3 molecules of RNA (25S, 5.8S and 5S). Interacts with ribosomal protein S21.

It is found in the cytoplasm. In terms of biological role, required for the assembly and/or stability of the 40S ribosomal subunit. Required for the processing of the 20S rRNA-precursor to mature 18S rRNA in a late step of the maturation of 40S ribosomal subunits. The sequence is that of Small ribosomal subunit protein uS2 from Chlamydomonas reinhardtii (Chlamydomonas smithii).